The primary structure comprises 183 residues: Peptidyl-tRNA hydrolase (183 aa).

Residue Y14 coordinates tRNA. H19 functions as the Proton acceptor in the catalytic mechanism. TRNA contacts are provided by Y61, N63, and N109.

The protein belongs to the PTH family. As to quaternary structure, monomer.

The protein resides in the cytoplasm. It catalyses the reaction an N-acyl-L-alpha-aminoacyl-tRNA + H2O = an N-acyl-L-amino acid + a tRNA + H(+). Functionally, hydrolyzes ribosome-free peptidyl-tRNAs (with 1 or more amino acids incorporated), which drop off the ribosome during protein synthesis, or as a result of ribosome stalling. Its function is as follows. Catalyzes the release of premature peptidyl moieties from peptidyl-tRNA molecules trapped in stalled 50S ribosomal subunits, and thus maintains levels of free tRNAs and 50S ribosomes. In Aliarcobacter butzleri (strain RM4018) (Arcobacter butzleri), this protein is Peptidyl-tRNA hydrolase.